The following is a 168-amino-acid chain: Probable chemoreceptor glutamine deamidase CheD (168 aa).

The protein belongs to the CheD family.

The enzyme catalyses L-glutaminyl-[protein] + H2O = L-glutamyl-[protein] + NH4(+). Probably deamidates glutamine residues to glutamate on methyl-accepting chemotaxis receptors (MCPs), playing an important role in chemotaxis. The protein is Probable chemoreceptor glutamine deamidase CheD of Pseudomonas syringae pv. tomato (strain ATCC BAA-871 / DC3000).